The sequence spans 183 residues: Oligoribonuclease (183 aa).

Positions 8–171 constitute an Exonuclease domain; that stretch reads LIWLDMEMTG…ADIRESIAEL (164 aa). Tyr-129 is a catalytic residue.

Belongs to the oligoribonuclease family.

It is found in the cytoplasm. 3'-to-5' exoribonuclease specific for small oligoribonucleotides. This Aromatoleum aromaticum (strain DSM 19018 / LMG 30748 / EbN1) (Azoarcus sp. (strain EbN1)) protein is Oligoribonuclease.